The following is a 388-amino-acid chain: 1D-myo-inositol 2-acetamido-2-deoxy-alpha-D-glucopyranoside deacetylase (388 aa).

Positions 6, 9, and 144 each coordinate Zn(2+). Positions 369–388 are disordered; the sequence is LDQADEGAAHDTSEQSGQRR.

It belongs to the MshB deacetylase family. Requires Zn(2+) as cofactor.

It carries out the reaction 1D-myo-inositol 2-acetamido-2-deoxy-alpha-D-glucopyranoside + H2O = 1D-myo-inositol 2-amino-2-deoxy-alpha-D-glucopyranoside + acetate. Functionally, catalyzes the deacetylation of 1D-myo-inositol 2-acetamido-2-deoxy-alpha-D-glucopyranoside (GlcNAc-Ins) in the mycothiol biosynthesis pathway. The sequence is that of 1D-myo-inositol 2-acetamido-2-deoxy-alpha-D-glucopyranoside deacetylase from Corynebacterium kroppenstedtii (strain DSM 44385 / JCM 11950 / CIP 105744 / CCUG 35717).